A 102-amino-acid chain; its full sequence is UPF0058 protein MTH_224 (102 aa).

It belongs to the UPF0058 family.

This Methanothermobacter thermautotrophicus (strain ATCC 29096 / DSM 1053 / JCM 10044 / NBRC 100330 / Delta H) (Methanobacterium thermoautotrophicum) protein is UPF0058 protein MTH_224.